Here is a 211-residue protein sequence, read N- to C-terminus: Large ribosomal subunit protein uL3 (211 aa).

Positions 126–147 (HGQSRGPMAHGSRYHRRPGSMG) are disordered.

The protein belongs to the universal ribosomal protein uL3 family. In terms of assembly, part of the 50S ribosomal subunit. Forms a cluster with proteins L14 and L19.

Its function is as follows. One of the primary rRNA binding proteins, it binds directly near the 3'-end of the 23S rRNA, where it nucleates assembly of the 50S subunit. The sequence is that of Large ribosomal subunit protein uL3 from Geobacillus thermodenitrificans (strain NG80-2).